We begin with the raw amino-acid sequence, 372 residues long: Glutamate 5-kinase (372 aa).

An ATP-binding site is contributed by Lys-6. Substrate contacts are provided by Ser-46, Asp-133, and Asn-145. Residues 165-166 (TD) and 207-213 (TGGMYTK) each bind ATP. The PUA domain occupies 272–350 (NGFLFVDEGA…HDIESILGYK (79 aa)).

This sequence belongs to the glutamate 5-kinase family.

The protein resides in the cytoplasm. It catalyses the reaction L-glutamate + ATP = L-glutamyl 5-phosphate + ADP. Its pathway is amino-acid biosynthesis; L-proline biosynthesis; L-glutamate 5-semialdehyde from L-glutamate: step 1/2. Functionally, catalyzes the transfer of a phosphate group to glutamate to form L-glutamate 5-phosphate. The sequence is that of Glutamate 5-kinase from Caldanaerobacter subterraneus subsp. tengcongensis (strain DSM 15242 / JCM 11007 / NBRC 100824 / MB4) (Thermoanaerobacter tengcongensis).